A 320-amino-acid polypeptide reads, in one-letter code: Beta-carotene 3-hydroxylase, chloroplastic (320 aa).

Residues 1 to 78 (METQFLVSGR…EKELRGKLVV (78 aa)) constitute a chloroplast transit peptide. Transmembrane regions (helical) follow at residues 118–138 (YLVAAVMSSFGITSMAVLSVY) and 152–172 (LSEMFGTFALSVGAAVGMEFW). Residues 165-292 (AAVGMEFWAR…KFNGVPYGLF (128 aa)) enclose the Fatty acid hydroxylase domain. The short motif at 177 to 182 (HEALWH) is the Histidine box-1 element. A Histidine box-2 motif is present at residues 189–193 (HESHH). 2 helical membrane-spanning segments follow: residues 204–224 (DIFAIINAVPAIALLSYGFFH) and 228–248 (IPGLCFGAGLGITVFGMAYMF). The short motif at 250-255 (HDGLVH) is the Histidine box-3 element. The Histidine box-4 motif lies at 276-280 (HTLHH).

Belongs to the sterol desaturase family.

It localises to the plastid. The protein localises to the chloroplast membrane. It carries out the reaction all-trans-beta-carotene + 4 reduced [2Fe-2S]-[ferredoxin] + 2 O2 + 4 H(+) = all-trans-zeaxanthin + 4 oxidized [2Fe-2S]-[ferredoxin] + 2 H2O. Functionally, nonheme diiron monooxygenase involved in the biosynthesis of xanthophylls. Specific for beta-ring hydroxylations of beta-carotene. Uses ferredoxin as an electron donor. In Gentiana lutea (Yellow gentian), this protein is Beta-carotene 3-hydroxylase, chloroplastic (BHY).